A 256-amino-acid chain; its full sequence is Pimeloyl-[acyl-carrier protein] methyl ester esterase (256 aa).

The AB hydrolase-1 domain occupies 15-242 (HLVLLHGWGL…AAHAPFISHP (228 aa)). Substrate-binding positions include tryptophan 22, 82–83 (SL), and 143–147 (FLALQ). Catalysis depends on serine 82, which acts as the Nucleophile. Catalysis depends on residues aspartate 207 and histidine 235. Residue histidine 235 coordinates substrate.

Belongs to the AB hydrolase superfamily. Carboxylesterase BioH family. As to quaternary structure, monomer.

Its subcellular location is the cytoplasm. It carries out the reaction 6-carboxyhexanoyl-[ACP] methyl ester + H2O = 6-carboxyhexanoyl-[ACP] + methanol + H(+). It participates in cofactor biosynthesis; biotin biosynthesis. The physiological role of BioH is to remove the methyl group introduced by BioC when the pimeloyl moiety is complete. It allows to synthesize pimeloyl-ACP via the fatty acid synthetic pathway through the hydrolysis of the ester bonds of pimeloyl-ACP esters. This chain is Pimeloyl-[acyl-carrier protein] methyl ester esterase, found in Escherichia coli (strain 55989 / EAEC).